Consider the following 209-residue polypeptide: Kynurenine formamidase (209 aa).

A substrate-binding site is contributed by Trp-19. Zn(2+) is bound by residues His-49, His-53, and Asp-55. The active-site Proton donor/acceptor is the His-59. Residues His-160 and Glu-172 each coordinate Zn(2+).

It belongs to the Cyclase 1 superfamily. KynB family. In terms of assembly, homodimer. Zn(2+) serves as cofactor.

It carries out the reaction N-formyl-L-kynurenine + H2O = L-kynurenine + formate + H(+). It participates in amino-acid degradation; L-tryptophan degradation via kynurenine pathway; L-kynurenine from L-tryptophan: step 2/2. Its function is as follows. Catalyzes the hydrolysis of N-formyl-L-kynurenine to L-kynurenine, the second step in the kynurenine pathway of tryptophan degradation. The chain is Kynurenine formamidase from Ralstonia pickettii (strain 12J).